An 812-amino-acid polypeptide reads, in one-letter code: Probable inorganic carbon transporter subunit DabA (812 aa).

Residues Cys-337, Asp-339, His-499, and Cys-514 each coordinate Zn(2+).

It belongs to the inorganic carbon transporter (TC 9.A.2) DabA family. Forms a complex with DabB. Zn(2+) is required as a cofactor.

It is found in the cell inner membrane. Part of an energy-coupled inorganic carbon pump. This Xanthomonas euvesicatoria pv. vesicatoria (strain 85-10) (Xanthomonas campestris pv. vesicatoria) protein is Probable inorganic carbon transporter subunit DabA.